Reading from the N-terminus, the 1101-residue chain is ATP-dependent DNA helicase mph1 (1101 aa).

Disordered regions lie at residues 22-59 (PGTS…SPDR), 95-138 (LTQP…QYHD), 154-231 (FEEE…TNRP), and 250-270 (SSQR…PTHH). The span at 24 to 48 (TSDTVESVQTNNRPAKQSDISISQG) shows a compositional bias: polar residues. Residues 170–190 (TPARTAAAPCAAPKGTAADVP) are compositionally biased toward low complexity. The segment covering 191 to 202 (FDLDDIPDDAFD) has biased composition (acidic residues). Polar residues predominate over residues 209-228 (PPRSTSQATRGPPVQSQFRT). One can recognise a Helicase ATP-binding domain in the interval 296-464 (IAQRGLFHNL…AIIDDLGIAK (169 aa)). 309–316 (LPTGLGKT) provides a ligand contact to ATP. A DEAH box motif is present at residues 412–415 (DEAH). The region spanning 634-808 (YLKQVVLNHF…GTRFTFHDDK (175 aa)) is the Helicase C-terminal domain. Disordered stretches follow at residues 824 to 890 (RQID…PTPE) and 991 to 1067 (SRDP…QDAF). Over residues 842 to 854 (RRARPPKRPPKKF) the composition is skewed to basic residues.

Belongs to the DEAD box helicase family. DEAH subfamily. FANCM sub-subfamily. Interacts with the MHF histone-fold complex to form the FANCM-MHF complex.

The protein localises to the nucleus. It carries out the reaction ATP + H2O = ADP + phosphate + H(+). In terms of biological role, ATP-dependent DNA helicase involved in DNA damage repair by homologous recombination and in genome maintenance. Capable of unwinding D-loops. Plays a role in limiting crossover recombinants during mitotic DNA double-strand break (DSB) repair. Component of a FANCM-MHF complex which promotes gene conversion at blocked replication forks, probably by reversal of the stalled fork. The protein is ATP-dependent DNA helicase mph1 of Aspergillus fumigatus (strain CBS 144.89 / FGSC A1163 / CEA10) (Neosartorya fumigata).